A 458-amino-acid chain; its full sequence is Mitochondrial distribution and morphology protein 10 (458 aa).

The segment at Leu307–Asp339 is disordered. The span at Ser326–Asp339 shows a compositional bias: basic and acidic residues.

It belongs to the MDM10 family. Component of the ER-mitochondria encounter structure (ERMES) or MDM complex, composed of MMM1, MDM10, MDM12 and MDM34. Associates with the mitochondrial outer membrane sorting assembly machinery SAM(core) complex.

Its subcellular location is the mitochondrion outer membrane. Component of the ERMES/MDM complex, which serves as a molecular tether to connect the endoplasmic reticulum and mitochondria. Components of this complex are involved in the control of mitochondrial shape and protein biogenesis and may function in phospholipid exchange. MDM10 is involved in the late assembly steps of the general translocase of the mitochondrial outer membrane (TOM complex). Functions in the TOM40-specific route of the assembly of outer membrane beta-barrel proteins, including the association of TOM40 with the receptor TOM22 and small TOM proteins. Can associate with the SAM(core) complex as well as the MDM12-MMM1 complex, both involved in late steps of the major beta-barrel assembly pathway, that is responsible for biogenesis of all outer membrane beta-barrel proteins. May act as a switch that shuttles between both complexes and channels precursor proteins into the TOM40-specific pathway. Plays a role in mitochondrial morphology and in the inheritance of mitochondria. The polypeptide is Mitochondrial distribution and morphology protein 10 (Lachancea thermotolerans (strain ATCC 56472 / CBS 6340 / NRRL Y-8284) (Yeast)).